A 796-amino-acid polypeptide reads, in one-letter code: Peroxisome proliferator-activated receptor gamma coactivator 1-alpha (796 aa).

Lysine 77 carries the N6-acetyllysine modification. Residues 98-138 form a disordered region; that stretch reads PVDEDGLPSFDALTDGDVTTDNEASPSSMPDGTPPPQEAEE. Residues 114-127 are compositionally biased toward polar residues; that stretch reads DVTTDNEASPSSMP. The LXXLL motif motif lies at 142–146; that stretch reads LKKLL. An N6-acetyllysine modification is found at lysine 144. The residue at position 176 (threonine 176) is a Phosphothreonine; by AMPK. Lysine 182 is modified (N6-acetyllysine). The segment at 211-275 is disordered; it reads YLTTNDDPPH…NDPKGSPFEN (65 aa). Residues 217-235 show a composition bias toward basic and acidic residues; sequence DPPHTKPTENRNSSRDKCA. Residues 242–258 are compositionally biased toward polar residues; the sequence is TQPQSQHAQAKPTTLSL. N6-acetyllysine occurs at positions 252, 269, 276, 319, 345, 411, 440, and 449. Residues 288-350 are disordered; sequence GTAGLTPPTT…HSTKKGPEQS (63 aa). The segment at 291–337 is interaction with PPARG; that stretch reads GLTPPTTPPHKANQDNPFKASPKLKPSCKTVVPPPTKRARYSECSGT. Residues 348–796 form a mediates interaction with RNF34 region; the sequence is EQSELYAQLS…LKEAQRSLRR (449 aa). Phosphoserine; by AMPK is present on serine 537. 2 disordered regions span residues 541–597 and 611–669; these read FNSP…SSRS and HRNS…QKQK. The span at 561–576 shows a compositional bias: basic residues; it reads QRMRSRSRSFSRHRSC. The segment covering 577-597 has biased composition (low complexity); it reads SRSPYSRSRSRSPGSRSSSRS. Residues 620–629 show a composition bias toward basic residues; it reads SRSRSPYSRR. Residues 630-669 are compositionally biased toward basic and acidic residues; the sequence is PRYDSYEANEHERLKRDEYRREYEKRESERAKQRERQKQK. Residues 675-751 enclose the RRM domain; that stretch reads RVIYVGKIRP…TDFELYFCGR (77 aa). N6-acetyllysine occurs at positions 756 and 777.

In terms of assembly, homooligomer. Interacts with MYBBP1A; inhibits MYBBP1A transcriptional activation. Interacts with PRDM16, LPIN1 and PML. Interacts (via LXXLL motif) with RORA and RORC (via AF-2 motif); activates RORA and RORC transcriptional activation. Interacts with LRPPRC. Interacts with FOXO1. Interacts with NR5A2. In terms of processing, phosphorylation by AMPK in skeletal muscle increases activation of its own promoter. Phosphorylated by CLK2. Post-translationally, heavily acetylated by KAT2A/GCN5 under conditions of high nutrients, leading to inactivation of PPARGC1A. Deacetylated by SIRT1 in low nutrients/high NAD conditions, leading to its activation. Ubiquitinated. Ubiquitination by RNF34 induces proteasomal degradation.

It localises to the nucleus. The protein localises to the PML body. Transcriptional coactivator for steroid receptors and nuclear receptors. Greatly increases the transcriptional activity of PPARG and thyroid hormone receptor on the uncoupling protein promoter. Can regulate key mitochondrial genes that contribute to the program of adaptive thermogenesis. Plays an essential role in metabolic reprogramming in response to dietary availability through coordination of the expression of a wide array of genes involved in glucose and fatty acid metabolism. Acts as a key regulator of gluconeogenesis: stimulates hepatic gluconeogenesis by increasing the expression of gluconeogenic enzymes, and acting together with FOXO1 to promote the fasting gluconeogenic program. Induces the expression of PERM1 in the skeletal muscle in an ESRRA-dependent manner. Also involved in the integration of the circadian rhythms and energy metabolism. Required for oscillatory expression of clock genes, such as BMAL1 and NR1D1, through the coactivation of RORA and RORC, and metabolic genes, such as PDK4 and PEPCK. This is Peroxisome proliferator-activated receptor gamma coactivator 1-alpha (Ppargc1a) from Rattus norvegicus (Rat).